Here is an 883-residue protein sequence, read N- to C-terminus: Protein SEY1 homolog (883 aa).

Residues 1-795 are Cytoplasmic-facing; the sequence is MQMDRKTQII…ETGGKMSLKN (795 aa). Residues 33–279 form the GB1/RHD3-type G domain; sequence GFNYNVVAIL…IPSDGFAHYC (247 aa). 43-50 contacts GTP; the sequence is GSQSSGKS. Residues 673–693 adopt a coiled-coil conformation; it reads LDEIMDVLKSKLDEISDNLSS. The helical transmembrane segment at 796-816 threads the bilayer; that stretch reads VPLFFWVILLILGWNELLFFI. Residues 817–819 lie on the Lumenal side of the membrane; it reads RFF. Residues 820-840 traverse the membrane as a helical segment; that stretch reads FRLNIILPLFLAAAVILSTLF. Over 841–883 the chain is Cytoplasmic; it reads FNGNMEVLSTINKVVFFLAKSSFGFYRQLQTMGEKVAQVPTAD.

It belongs to the TRAFAC class dynamin-like GTPase superfamily. GB1/RHD3 GTPase family. RHD3 subfamily.

Its subcellular location is the endoplasmic reticulum membrane. Probable GTP-binding protein involved in generating and maintaining the structure of the tubular endoplasmic reticulum network. This chain is Protein SEY1 homolog, found in Plasmodium knowlesi (strain H).